A 223-amino-acid chain; its full sequence is Putative nudix hydrolase 2 (223 aa).

The 142-residue stretch at 72-213 (ASADGVSIIA…SIVVESTLLA (142 aa)) folds into the Nudix hydrolase domain. The Nudix box motif lies at 111 to 132 (GLIDAGETAQQAAIRELKEETG). Mg(2+) is bound by residues E126 and E130.

Belongs to the Nudix hydrolase family. Mg(2+) is required as a cofactor. It depends on Mn(2+) as a cofactor.

Functionally, probably mediates the hydrolysis of some nucleoside diphosphate derivatives. The chain is Putative nudix hydrolase 2 (ndx-2) from Caenorhabditis elegans.